The sequence spans 255 residues: Acetylglutamate kinase (255 aa).

Substrate contacts are provided by residues 40-41 (GG), Arg-62, and Asn-153.

It belongs to the acetylglutamate kinase family. ArgB subfamily.

Its subcellular location is the cytoplasm. The catalysed reaction is N-acetyl-L-glutamate + ATP = N-acetyl-L-glutamyl 5-phosphate + ADP. The protein operates within amino-acid biosynthesis; L-arginine biosynthesis; N(2)-acetyl-L-ornithine from L-glutamate: step 2/4. In terms of biological role, catalyzes the ATP-dependent phosphorylation of N-acetyl-L-glutamate. The protein is Acetylglutamate kinase of Bacillus cereus (strain ATCC 10987 / NRS 248).